A 98-amino-acid polypeptide reads, in one-letter code: Citrate lyase acyl carrier protein (98 aa).

Ser-14 is modified (O-(phosphoribosyl dephospho-coenzyme A)serine).

The protein belongs to the CitD family. As to quaternary structure, oligomer with a subunit composition of (alpha,beta,gamma)6.

The protein localises to the cytoplasm. Covalent carrier of the coenzyme of citrate lyase. The polypeptide is Citrate lyase acyl carrier protein (Citrobacter koseri (strain ATCC BAA-895 / CDC 4225-83 / SGSC4696)).